The sequence spans 268 residues: Ribosomal RNA small subunit methyltransferase A (268 aa).

Residues N18, L20, G45, E66, D91, and N112 each contribute to the S-adenosyl-L-methionine site.

The protein belongs to the class I-like SAM-binding methyltransferase superfamily. rRNA adenine N(6)-methyltransferase family. RsmA subfamily.

The protein resides in the cytoplasm. It catalyses the reaction adenosine(1518)/adenosine(1519) in 16S rRNA + 4 S-adenosyl-L-methionine = N(6)-dimethyladenosine(1518)/N(6)-dimethyladenosine(1519) in 16S rRNA + 4 S-adenosyl-L-homocysteine + 4 H(+). Functionally, specifically dimethylates two adjacent adenosines (A1518 and A1519) in the loop of a conserved hairpin near the 3'-end of 16S rRNA in the 30S particle. May play a critical role in biogenesis of 30S subunits. The sequence is that of Ribosomal RNA small subunit methyltransferase A from Shewanella baltica (strain OS223).